A 122-amino-acid polypeptide reads, in one-letter code: uncharacterized protein (122 aa).

The signal sequence occupies residues 1–20 (MGFHFCIWIIFLLPPPCKKC).

The protein localises to the secreted. This is an uncharacterized protein from Homo sapiens (Human).